We begin with the raw amino-acid sequence, 77 residues long: U3-theraphotoxin-Hhn1k (77 aa).

The first 14 residues, T1–A14, serve as a signal peptide directing secretion. Residues S15 to R42 constitute a propeptide that is removed on maturation. Intrachain disulfides connect C44-C57 and C56-C69.

Belongs to the neurotoxin 10 (Hwtx-1) family. 51 (Hntx-8) subfamily. Hntx-8 sub-subfamily. As to expression, expressed by the venom gland.

It localises to the secreted. In terms of biological role, ion channel inhibitor. The polypeptide is U3-theraphotoxin-Hhn1k (Cyriopagopus hainanus (Chinese bird spider)).